The chain runs to 287 residues: Large ribosomal subunit protein uL2 (287 aa).

Residues arginine 221 to serine 287 are disordered. Positions lysine 258 to serine 287 are enriched in basic residues.

It belongs to the universal ribosomal protein uL2 family. In terms of assembly, part of the 50S ribosomal subunit. Forms a bridge to the 30S subunit in the 70S ribosome.

Its function is as follows. One of the primary rRNA binding proteins. Required for association of the 30S and 50S subunits to form the 70S ribosome, for tRNA binding and peptide bond formation. It has been suggested to have peptidyltransferase activity; this is somewhat controversial. Makes several contacts with the 16S rRNA in the 70S ribosome. This is Large ribosomal subunit protein uL2 from Synechococcus sp. (strain CC9311).